Here is a 57-residue protein sequence, read N- to C-terminus: Preprotein translocase subunit SecG (57 aa).

Residues 1-31 (MAKKKGEGPGLMSSAGLMRYFESEETSIKLD) lie on the Cytoplasmic side of the membrane. A helical membrane pass occupies residues 32 to 53 (PKMVIGAGIASGVAIMALNITF). Residues 54-57 (GLWP) lie on the Extracellular side of the membrane.

This sequence belongs to the SEC61-beta family. Component of the protein translocase complex. Heterotrimer consisting of alpha (SecY), beta (SecG) and gamma (SecE) subunits. Can form oligomers of the heterotrimer.

The protein localises to the cell membrane. Its function is as follows. Involved in protein export. The function of the beta subunit is unknown, but it may be involved in stabilization of the trimeric complex. The protein is Preprotein translocase subunit SecG of Methanothrix thermoacetophila (strain DSM 6194 / JCM 14653 / NBRC 101360 / PT) (Methanosaeta thermophila).